A 247-amino-acid polypeptide reads, in one-letter code: Small ribosomal subunit protein uS2 (247 aa).

Belongs to the universal ribosomal protein uS2 family.

The protein is Small ribosomal subunit protein uS2 of Ralstonia nicotianae (strain ATCC BAA-1114 / GMI1000) (Ralstonia solanacearum).